The following is a 148-amino-acid chain: Outer envelope pore protein 16-1, chloroplastic (148 aa).

The interval 2-73 is contains 4 beta strands; the sequence is PSSTFSGTVS…EHALKKLCKE (72 aa). Helical transmembrane passes span 75–91, 102–118, and 125–142; these read VYWG…EYGI, NAML…SAVG, and IVID…SQFV.

The protein belongs to the Tim17/Tim22/Tim23 family. Plastid outer envelope porin OEP16 (TC 1.B.30) subfamily. As to quaternary structure, homodimer and oligomers in membrane. Forms large complexes including TOC33, pPORA and OEP161 during pPORA import into plastids at the plastid envelope membrane. In terms of tissue distribution, expressed predominantly in leaves and cotyledons.

The protein localises to the plastid. It is found in the chloroplast outer membrane. The protein resides in the etioplast membrane. Its activity is regulated as follows. Stimulated by GTP. Its function is as follows. Voltage-dependent high-conductance channel with a slight cation-selectivity; selective for amino acids but excludes triosephosphates or uncharged sugars. Non-essential amino acid-selective channel protein and translocation pore for NADPH:protochlorophyllide oxidoreductase A (PORA) and possibly PORB. Involved in PORA precursor (pPORA) import and thus confers photoprotection onto etiolated seedlings during greening. This Arabidopsis thaliana (Mouse-ear cress) protein is Outer envelope pore protein 16-1, chloroplastic (OEP161).